A 698-amino-acid polypeptide reads, in one-letter code: Polyribonucleotide nucleotidyltransferase (698 aa).

2 residues coordinate Mg(2+): D485 and D491. Residues 552–612 (PRVEMMTIPE…SDLKGAKSIV (61 aa)) form the KH domain. One can recognise an S1 motif domain in the interval 622–690 (GMVYDGTVKK…KLGRLNLSYV (69 aa)).

Belongs to the polyribonucleotide nucleotidyltransferase family. Mg(2+) serves as cofactor.

It localises to the cytoplasm. The enzyme catalyses RNA(n+1) + phosphate = RNA(n) + a ribonucleoside 5'-diphosphate. Functionally, involved in mRNA degradation. Catalyzes the phosphorolysis of single-stranded polyribonucleotides processively in the 3'- to 5'-direction. The sequence is that of Polyribonucleotide nucleotidyltransferase from Treponema denticola (strain ATCC 35405 / DSM 14222 / CIP 103919 / JCM 8153 / KCTC 15104).